Consider the following 441-residue polypeptide: EMI domain-containing protein 1 (441 aa).

Positions 1-22 are cleaved as a signal peptide; sequence MGGPRAWALLCLGLLLPGGGAA. The 74-residue stretch at 33-106 folds into the EMI domain; sequence RRNWCSYVVT…PGHSGVSCEE (74 aa). 3 cysteine pairs are disulfide-bonded: cysteine 37-cysteine 96, cysteine 62-cysteine 68, and cysteine 95-cysteine 104. A glycan (O-linked (Fuc) threonine) is linked at threonine 42. Residue asparagine 51 is glycosylated (N-linked (GlcNAc...) asparagine). A glycan (N-linked (GlcNAc...) asparagine) is linked at asparagine 136. 2 disordered regions span residues 162–371 and 405–441; these read QPVP…KSHW and SGAG…DERG. 2 stretches are compositionally biased toward pro residues: residues 163–184 and 222–231; these read PVPP…PPAQ and PPGPQGPPGS. In terms of domain architecture, Collagen-like spans 179 to 368; sequence GPPPAQGSPG…PGPKGDPGEK (190 aa). Low complexity predominate over residues 232–243; sequence PGRAGAVGTPGE. Residues 244-264 show a composition bias toward pro residues; that stretch reads RGPPGPPGPPGPPGPPAPVGP. Residues 277–288 are compositionally biased toward polar residues; it reads LSNTFTETNNHW. Positions 292–311 are enriched in pro residues; sequence PTGPPGPPGPMGPPGPPGPT. Basic and acidic residues-rich tracts occupy residues 335–344 and 359–371; these read PGEKGERGLR and PGPK…KSHW.

Homo- or heteromers. In terms of processing, O-fucosylated at Thr-42 within the EMI domain by FUT10/POFUT3 and FUT11/POFUT4.

The protein resides in the secreted. It localises to the extracellular space. Its subcellular location is the extracellular matrix. The chain is EMI domain-containing protein 1 (EMID1) from Homo sapiens (Human).